A 203-amino-acid polypeptide reads, in one-letter code: Outer-membrane lipoprotein carrier protein (203 aa).

The signal sequence occupies residues 1–20; that stretch reads MKKWLAISCLIAGMTSTAVY.

This sequence belongs to the LolA family. As to quaternary structure, monomer.

Its subcellular location is the periplasm. Functionally, participates in the translocation of lipoproteins from the inner membrane to the outer membrane. Only forms a complex with a lipoprotein if the residue after the N-terminal Cys is not an aspartate (The Asp acts as a targeting signal to indicate that the lipoprotein should stay in the inner membrane). The protein is Outer-membrane lipoprotein carrier protein of Pectobacterium carotovorum subsp. carotovorum (strain PC1).